Here is a 337-residue protein sequence, read N- to C-terminus: Cathepsin L-like (337 aa).

Residues 1–18 form the signal peptide; sequence MNRFILLALVAAVVAVNS. Residues 19–119 constitute a propeptide, activation peptide; sequence AKLSRQIESA…SSFLAPFNVQ (101 aa). N-linked (GlcNAc...) asparagine glycosylation is present at Asn108. Cystine bridges form between Cys141–Cys184, Cys175–Cys217, and Cys276–Cys326. The active site involves Cys144. Catalysis depends on residues His283 and Asn304.

Belongs to the peptidase C1 family. As to expression, expressed in intestine, pharynx posterior bulb, hypodermis and cuticle (at protein level). Expressed in germ cells, developing oocytes, sheath cells surrounding germ cells and oocytes, and in the eggshell (at protein level).

The protein localises to the secreted. It is found in the cytoplasmic granule. It localises to the lysosome. Its subcellular location is the endosome. The protein resides in the cytoplasmic vesicle. The protein localises to the phagosome. The catalysed reaction is Specificity close to that of papain. As compared to cathepsin B, cathepsin L exhibits higher activity toward protein substrates, but has little activity on Z-Arg-Arg-NHMec, and no peptidyl-dipeptidase activity.. Cysteine protease which plays an essential role in the degradation of proteins in lysosomes. During early embryogenesis, maternally required for the proteolytic processing of yolk proteins in platelets, a lysosome-like structure where a slow and controlled degradation of yolk proteins occurs. In the gonad, required for the clearance of apoptotic germ cells in the engulfing cell phagolysosomes. In embryos, required for the degradation of endocytic and autophagic cargos. In embryos, may play a role in the degradation of lipid-containing droplets. Required for larval development. The protein is Cathepsin L-like of Caenorhabditis elegans.